The chain runs to 957 residues: Melanoma-associated antigen E1 (957 aa).

The interval 1-433 (MSLVSQNSRR…RNPSKCSIVL (433 aa)) is disordered. Composition is skewed to polar residues over residues 85-96 (SEASSASGQPTV) and 104-130 (LLATPSEGLSTSGPPTISKGLCTSVTL). A compositionally biased stretch (low complexity) spans 138–156 (TSRPPTSSEEPSTSVPATP). 6 stretches are compositionally biased toward polar residues: residues 158–177 (EGTSTSVPPTASEGPSTSVV), 220–232 (LSTSVPPTATEGL), 256–306 (RSTT…GPST), 328–344 (LSTSVPPTATEGLSTSV), 364–380 (RSTSVPPTASDGSDTSV), and 414–428 (TLFSSSASVDRNPSK). 2 consecutive MAGE domains span residues 491 to 690 (MEQN…YNEA) and 745 to 936 (LESK…YREA). Positions 743-957 (SRLESKARKL…HRQFFVHNFR (215 aa)) are interaction with DTNA.

Interacts with DTNA. Interacts with TRIM28.

Its subcellular location is the cytoplasm. The protein localises to the perinuclear region. The protein resides in the nucleus. It localises to the cell membrane. Functionally, may enhance ubiquitin ligase activity of RING-type zinc finger-containing E3 ubiquitin-protein ligases. Proposed to act through recruitment and/or stabilization of the Ubl-conjugating enzyme (E2) at the E3:substrate complex. The chain is Melanoma-associated antigen E1 (MAGEE1) from Macaca fascicularis (Crab-eating macaque).